A 222-amino-acid polypeptide reads, in one-letter code: MIDYQEVLSRYRPTQEEENRLRIISDDIIRKINSICRSRRLRAEAVIVGSYAKGTNLRDGDLDIFIAFDRDYPEEIINTEGLHIGHAVIPNGREKYAEHPYVSGEIGGVKIDVVPCYKMSFGDRKISAVDRTLLHTEYVNGHLDEKGRDEVRLLKIFTKSIGVYGAEARTFGFSGYLCELLVIRFRSFENVIRYFSKAKGRVLIDPDERFRDPMLLIDPVDP.

ATP contacts are provided by Ser-50 and Lys-53. The CTP site is built by Ser-50 and Lys-53. 3 residues coordinate Mg(2+): Asp-61, Asp-63, and Asp-112. The ATP site is built by His-135, Lys-155, and Tyr-164. CTP is bound by residues His-135, Lys-155, and Tyr-164.

Belongs to the tRNA nucleotidyltransferase/poly(A) polymerase family. Archaeal CCA-adding enzyme subfamily. As to quaternary structure, homodimer. It depends on Mg(2+) as a cofactor.

The catalysed reaction is a tRNA precursor + 2 CTP + ATP = a tRNA with a 3' CCA end + 3 diphosphate. It carries out the reaction a tRNA with a 3' CCA end + 2 CTP + ATP = a tRNA with a 3' CCACCA end + 3 diphosphate. Catalyzes the addition and repair of the essential 3'-terminal CCA sequence in tRNAs without using a nucleic acid template. Adds these three nucleotides in the order of C, C, and A to the tRNA nucleotide-73, using CTP and ATP as substrates and producing inorganic pyrophosphate. tRNA 3'-terminal CCA addition is required both for tRNA processing and repair. Also involved in tRNA surveillance by mediating tandem CCA addition to generate a CCACCA at the 3' terminus of unstable tRNAs. While stable tRNAs receive only 3'-terminal CCA, unstable tRNAs are marked with CCACCA and rapidly degraded. This chain is CCA-adding enzyme, found in Thermoplasma acidophilum.